Here is a 392-residue protein sequence, read N- to C-terminus: Bifunctional enzyme Fae/Hps (392 aa).

A formaldehyde-activating enzyme region spans residues 1–161; the sequence is MFLVGEALIG…YEKERSVHPV (161 aa). Catalysis depends on His-17, which acts as the Proton donor. The substrate site is built by Asp-19, Leu-48, Lys-66, Thr-68, and Gln-83. The interval 162–392 is 3-hexulose-6-phosphate synthase; it reads MGYRVMRLWD…IDQYRIMTDF (231 aa).

In the N-terminal section; belongs to the formaldehyde-activating enzyme family. The protein in the C-terminal section; belongs to the HPS/KGPDC family. HPS subfamily.

It carries out the reaction 5,6,7,8-tetrahydromethanopterin + formaldehyde = 5,10-methylenetetrahydromethanopterin + H2O. The catalysed reaction is D-ribulose 5-phosphate + formaldehyde = D-arabino-hex-3-ulose 6-phosphate. It participates in carbohydrate biosynthesis; D-ribose 5-phosphate biosynthesis. Its function is as follows. Catalyzes the condensation of formaldehyde with tetrahydromethanopterin (H(4)MPT) to 5,10-methylenetetrahydromethanopterin. Catalyzes the reversible formation of ribulose-5-phosphate and formaldehyde from 3-hexulose-6-phosphate. The chain is Bifunctional enzyme Fae/Hps from Methanothrix thermoacetophila (strain DSM 6194 / JCM 14653 / NBRC 101360 / PT) (Methanosaeta thermophila).